The following is a 455-amino-acid chain: Transmembrane protease serine 5 (455 aa).

At 1 to 49 (MSPTLDDQSPMEIRCTEEGAGPGIFRMELGDQRQSISQSQRWCCLQRGC) the chain is on the cytoplasmic side. Residues 50–70 (VILGVLGLLAGAGIASWLLVL) traverse the membrane as a helical; Signal-anchor for type II membrane protein segment. Residues 71–455 (YLWPAASPSI…DWIHDTVQVR (385 aa)) lie on the Extracellular side of the membrane. One can recognise an SRCR domain in the interval 112-207 (FRINGEDLLL…SGRIVSLKCS (96 aa)). Intrachain disulfides connect Cys-135/Cys-196, Cys-148/Cys-206, Cys-209/Cys-328, Cys-243/Cys-259, Cys-342/Cys-411, Cys-374/Cys-390, and Cys-401/Cys-429. Residues Asn-163 and Asn-170 are each glycosylated (N-linked (GlcNAc...) asparagine). Positions 218-453 (IVGGQAVASG…FLDWIHDTVQ (236 aa)) constitute a Peptidase S1 domain. Catalysis depends on charge relay system residues His-258 and Asp-308. Asn-319 and Asn-375 each carry an N-linked (GlcNAc...) asparagine glycan. Residue Ser-405 is the Charge relay system of the active site.

The protein belongs to the peptidase S1 family.

Its subcellular location is the cell membrane. Its function is as follows. May play a role in hearing. The polypeptide is Transmembrane protease serine 5 (Tmprss5) (Mus musculus (Mouse)).